A 244-amino-acid chain; its full sequence is 1-(5-phosphoribosyl)-5-[(5-phosphoribosylamino)methylideneamino] imidazole-4-carboxamide isomerase (244 aa).

Asp13 serves as the catalytic Proton acceptor. Catalysis depends on Asp132, which acts as the Proton donor.

Belongs to the HisA/HisF family.

The protein resides in the cytoplasm. It carries out the reaction 1-(5-phospho-beta-D-ribosyl)-5-[(5-phospho-beta-D-ribosylamino)methylideneamino]imidazole-4-carboxamide = 5-[(5-phospho-1-deoxy-D-ribulos-1-ylimino)methylamino]-1-(5-phospho-beta-D-ribosyl)imidazole-4-carboxamide. Its pathway is amino-acid biosynthesis; L-histidine biosynthesis; L-histidine from 5-phospho-alpha-D-ribose 1-diphosphate: step 4/9. The protein is 1-(5-phosphoribosyl)-5-[(5-phosphoribosylamino)methylideneamino] imidazole-4-carboxamide isomerase of Renibacterium salmoninarum (strain ATCC 33209 / DSM 20767 / JCM 11484 / NBRC 15589 / NCIMB 2235).